The following is a 693-amino-acid chain: MDYNKLRNIGISAHIDSGKTTLTERILFYCNKIHAIHEVKGKDGVGATMDSMELERERGITIASAATHVEWKDFPINIIDTPGHVDFTIEVERSLRVLDGAILVLDSVAGVQSQSITVDRQLKRYSVPRLAFVNKCDKTGANPYNVRDQLRSKLDLNSVLMQIPIGLEDKHIGVIDLVLMKAYYFEGKDGTEIIEKEIPSDLLGEAKKKREIMLDALADFNDELMELHMEGKDVPIEIICNAIRTGTLALKLCPVFMGSAYKNKGVQLLLDAVTRFLPSPHDIKNTALDINNNEKEIDLKIDNDLPTVALAFKLEDGQYGQLTYVRIYQGTLRKGQELINSRTSKKFKVGRLIRMHANNTEDIEFGGSGDIVALFGIECASGDTFCDPSINYSMTSMFIPDPVISLSVKPKDKKSADNMAKALGRFTKEDPTFKTYVDIESNETIIQGMGELHLEVYIERMKREFKAEVETGMPQVAYRETITGKAEFNYTHKKQSGGAGQFGRVAGFMEPLNKEGETYEFVNLIKGGVIPTEYIPSCDKGFQKAMEKGTLIGFPIVDIKITINDGQYHIVDSSDIAFQLAAIGAFREAYEKAKPTILEPIMKVTLEGPTEFQGNMFGLLNQRRGIITGSLEDGSFSKVEAEVPLSEMFGFSTVLRSSTQGKAEFSMEFLKYGKVPNAIFDELRKKFNDQNKS.

In terms of domain architecture, tr-type G spans 4–281 (NKLRNIGISA…AVTRFLPSPH (278 aa)). Residues 13-20 (AHIDSGKT), 80-84 (DTPGH), and 134-137 (NKCD) contribute to the GTP site.

It belongs to the TRAFAC class translation factor GTPase superfamily. Classic translation factor GTPase family. EF-G/EF-2 subfamily.

It is found in the cytoplasm. Functionally, catalyzes the GTP-dependent ribosomal translocation step during translation elongation. During this step, the ribosome changes from the pre-translocational (PRE) to the post-translocational (POST) state as the newly formed A-site-bound peptidyl-tRNA and P-site-bound deacylated tRNA move to the P and E sites, respectively. Catalyzes the coordinated movement of the two tRNA molecules, the mRNA and conformational changes in the ribosome. The polypeptide is Elongation factor G 1 (Borrelia garinii subsp. bavariensis (strain ATCC BAA-2496 / DSM 23469 / PBi) (Borreliella bavariensis)).